The sequence spans 243 residues: Probable transcriptional regulatory protein BB_0025 (243 aa).

It belongs to the TACO1 family.

Its subcellular location is the cytoplasm. The sequence is that of Probable transcriptional regulatory protein BB_0025 from Borreliella burgdorferi (strain ATCC 35210 / DSM 4680 / CIP 102532 / B31) (Borrelia burgdorferi).